The following is a 202-amino-acid chain: MALQQIVEQTVAGLGYDLVEIERSAGGLLRITIDLPWQPPVEGAASDAAAPAGPEAFVTVEDCEKVTRQLQFALEVDGVDYKRLEVSSPGIDRPLRHEQDFQRFAGEVIDITLKAPIGDAAAGQVNANRKKFRGTLERAETGGWQIVWSDEPPPKPGQKVSKKRVPAPLQALGFTLDELRDARLAPIVDFKGRGPKGGPAPD.

The protein belongs to the RimP family.

Its subcellular location is the cytoplasm. Functionally, required for maturation of 30S ribosomal subunits. In Paracidovorax citrulli (strain AAC00-1) (Acidovorax citrulli), this protein is Ribosome maturation factor RimP.